Consider the following 129-residue polypeptide: NADPH-dependent 7-cyano-7-deazaguanine reductase (129 aa).

Residue cysteine 34 is the Thioimide intermediate of the active site. The active-site Proton donor is the aspartate 41. Substrate is bound by residues 56 to 58 (VEL) and 75 to 76 (HE).

Belongs to the GTP cyclohydrolase I family. QueF type 1 subfamily.

Its subcellular location is the cytoplasm. It carries out the reaction 7-aminomethyl-7-carbaguanine + 2 NADP(+) = 7-cyano-7-deazaguanine + 2 NADPH + 3 H(+). It functions in the pathway tRNA modification; tRNA-queuosine biosynthesis. In terms of biological role, catalyzes the NADPH-dependent reduction of 7-cyano-7-deazaguanine (preQ0) to 7-aminomethyl-7-deazaguanine (preQ1). This is NADPH-dependent 7-cyano-7-deazaguanine reductase from Alkalilimnicola ehrlichii (strain ATCC BAA-1101 / DSM 17681 / MLHE-1).